Consider the following 308-residue polypeptide: Phenylcoumaran benzylic ether reductase TP7 (308 aa).

NADP(+) is bound by residues 11-17, Arg36, and Lys45; that span reads GGTGYIG. Residue Lys133 is the Proton acceptor of the active site. Arg137 lines the NADP(+) pocket.

This sequence belongs to the NmrA-type oxidoreductase family. Isoflavone reductase subfamily. Expressed in flowers. Expressed at low levels in stems.

The enzyme catalyses (-)-dehydrodiconiferyl alcohol + NADPH + H(+) = (S)-isodihydrodehydrodiconiferyl alcohol + NADP(+). It carries out the reaction (+)-dehydrodiconiferyl alcohol + NADPH + H(+) = (R)-isodihydrodehydrodiconiferyl alcohol + NADP(+). It catalyses the reaction (2R,3S)-dihydrodehydrodiconiferyl alcohol + NADPH + H(+) = (S)-tetrahydrodehydrodiconiferyl alcohol + NADP(+). The catalysed reaction is (2S,3R)-dihydrodehydrodiconiferyl alcohol + NADPH + H(+) = (R)-tetrahydrodehydrodiconiferyl alcohol + NADP(+). Its function is as follows. Oxidoreductase involved in lignan biosynthesis. Catalyzes the NADPH-dependent reduction of phenylcoumaran benzylic ethers. Converts dehydrodiconiferyl alcohol (DDC) to isodihydrodehydrodiconiferyl alcohol (IDDDC), and dihydrodehydrodiconiferyl alcohol (DDDC) to tetrahydrodehydrodiconiferyl alcohol (TDDC). The sequence is that of Phenylcoumaran benzylic ether reductase TP7 from Nicotiana tabacum (Common tobacco).